Reading from the N-terminus, the 308-residue chain is Probable pyridoxal 5'-phosphate synthase subunit pdx-1 (308 aa).

D30 is a binding site for D-ribose 5-phosphate. Residue K87 is the Schiff-base intermediate with D-ribose 5-phosphate of the active site. G159 is a D-ribose 5-phosphate binding site. R171 contacts D-glyceraldehyde 3-phosphate. D-ribose 5-phosphate-binding positions include G224 and 245 to 246 (GS).

Belongs to the PdxS/SNZ family.

It carries out the reaction aldehydo-D-ribose 5-phosphate + D-glyceraldehyde 3-phosphate + L-glutamine = pyridoxal 5'-phosphate + L-glutamate + phosphate + 3 H2O + H(+). It participates in cofactor biosynthesis; pyridoxal 5'-phosphate biosynthesis. Its function is as follows. Catalyzes the formation of pyridoxal 5'-phosphate from ribose 5-phosphate (RBP), glyceraldehyde 3-phosphate (G3P) and ammonia. The ammonia is provided by pdx-2. Can also use ribulose 5-phosphate and dihydroxyacetone phosphate as substrates, resulting from enzyme-catalyzed isomerization of RBP and G3P, respectively. Also plays an indirect role in resistance to singlet oxygen-generating photosensitizers. This chain is Probable pyridoxal 5'-phosphate synthase subunit pdx-1 (pdx-1), found in Neurospora crassa (strain ATCC 24698 / 74-OR23-1A / CBS 708.71 / DSM 1257 / FGSC 987).